A 36-amino-acid chain; its full sequence is Photosystem II reaction center protein Psb30 (36 aa).

Residues isoleucine 8–leucine 28 traverse the membrane as a helical segment.

Belongs to the Psb30/Ycf12 family. PSII is composed of 1 copy each of membrane proteins PsbA, PsbB, PsbC, PsbD, PsbE, PsbF, PsbH, PsbI, PsbJ, PsbK, PsbL, PsbM, PsbT, PsbX, PsbY, PsbZ, Psb30/Ycf12, peripheral proteins of the oxygen-evolving complex and a large number of cofactors. It forms dimeric complexes.

The protein localises to the plastid. Its subcellular location is the cyanelle thylakoid membrane. In terms of biological role, a core subunit of photosystem II (PSII), probably helps stabilize the reaction center. The protein is Photosystem II reaction center protein Psb30 of Cyanophora paradoxa.